Reading from the N-terminus, the 142-residue chain is uncharacterized protein (142 aa).

One can recognise an N-acetyltransferase domain in the interval Met-1–Asp-120.

It belongs to the acetyltransferase family.

This is an uncharacterized protein from Streptococcus pyogenes serotype M3 (strain ATCC BAA-595 / MGAS315).